We begin with the raw amino-acid sequence, 387 residues long: Lactosylceramide alpha-2,3-sialyltransferase (387 aa).

Residues 1–33 lie on the Cytoplasmic side of the membrane; the sequence is MPNEFTSAKLRSDCSRTSLQWYTQTQHKMRRPS. The helical; Signal-anchor for type II membrane protein transmembrane segment at 34–54 threads the bilayer; sequence LLLKDILKCMLVVFGVWLLYI. Residues 55–387 are Extracellular-facing; that stretch reads LKLNYTAEEC…VVQDLSGGIH (333 aa). 2 N-linked (GlcNAc...) asparagine glycosylation sites follow: asparagine 58 and asparagine 208. Cysteine 167 and cysteine 325 are disulfide-bonded.

Belongs to the glycosyltransferase 29 family.

Its subcellular location is the golgi apparatus membrane. It catalyses the reaction a beta-D-Gal-(1-&gt;4)-beta-D-Glc-(1&lt;-&gt;1)-Cer(d18:1(4E)) + CMP-N-acetyl-beta-neuraminate = a ganglioside GM3 (d18:1(4E)) + CMP + H(+). The catalysed reaction is ganglioside GA2 (d18:1(4E)/18:0) + CMP-N-acetyl-beta-neuraminate = ganglioside GM2 (d18:1(4E)/18:0) + CMP + H(+). The enzyme catalyses a beta-D-Gal-(1&lt;-&gt;1')-ceramide + CMP-N-acetyl-beta-neuraminate = N-acetyl-alpha-neuraminosyl-(2-&gt;3)-beta-D-galactosyl-(1&lt;-&gt;1')-ceramide + CMP + H(+). It carries out the reaction ganglioside GA1 (d18:1(4E)/18:0) + CMP-N-acetyl-beta-neuraminate = ganglioside GM1 (d18:1(4E)/18:0) + CMP + H(+). Transfers the sialyl group (N-acetyl-alpha-neuraminyl or NeuAc) from CMP-NeuAc to the non-reducing terminal galactose (Gal) of glycosphingolipids forming gangliosides (important molecules involved in the regulation of multiple cellular processes, including cell proliferation and differentiation, apoptosis, embryogenesis, development, and oncogenesis). Mainly involved in the biosynthesis of ganglioside GM3 but can also use different glycolipids as substrate acceptors such as D-galactosylceramide (GalCer), asialo-GM2 (GA2) and asialo-GM1 (GA1), although less preferentially than beta-D-Gal-(1-&gt;4)-beta-D-Glc-(1&lt;-&gt;1)-Cer (LacCer). The chain is Lactosylceramide alpha-2,3-sialyltransferase (St3gal5) from Rattus norvegicus (Rat).